Consider the following 949-residue polypeptide: UvrABC system protein A (949 aa).

An ATP-binding site is contributed by 42-49 (GLSGSGKS). Residues 262–289 (CPVCSYSLPELEPRLFSFNNPMGSCPTC) form a C4-type zinc finger. ABC transporter domains follow at residues 319-596 (WDKR…ENSV) and 616-945 (VNPD…KYLK). 649–656 (GVSGSGKS) provides a ligand contact to ATP. Residues 748-774 (CEACQGDGVIKVEMHFLPDVYVPCEVC) form a C4-type zinc finger.

This sequence belongs to the ABC transporter superfamily. UvrA family. Forms a heterotetramer with UvrB during the search for lesions.

The protein resides in the cytoplasm. Its function is as follows. The UvrABC repair system catalyzes the recognition and processing of DNA lesions. UvrA is an ATPase and a DNA-binding protein. A damage recognition complex composed of 2 UvrA and 2 UvrB subunits scans DNA for abnormalities. When the presence of a lesion has been verified by UvrB, the UvrA molecules dissociate. The protein is UvrABC system protein A of Neisseria meningitidis serogroup B (strain ATCC BAA-335 / MC58).